The primary structure comprises 185 residues: dCTP deaminase (185 aa).

DCTP-binding positions include 107–112 (KSTYAR), 131–133 (TLE), Gln-152, Tyr-166, and Gln-176. Glu-133 serves as the catalytic Proton donor/acceptor.

The protein belongs to the dCTP deaminase family. As to quaternary structure, homotrimer.

It carries out the reaction dCTP + H2O + H(+) = dUTP + NH4(+). It functions in the pathway pyrimidine metabolism; dUMP biosynthesis; dUMP from dCTP (dUTP route): step 1/2. Catalyzes the deamination of dCTP to dUTP. In Neorickettsia sennetsu (strain ATCC VR-367 / Miyayama) (Ehrlichia sennetsu), this protein is dCTP deaminase.